A 130-amino-acid polypeptide reads, in one-letter code: Small ribosomal subunit protein uS8 (130 aa).

This sequence belongs to the universal ribosomal protein uS8 family. As to quaternary structure, part of the 30S ribosomal subunit. Contacts proteins S5 and S12.

Functionally, one of the primary rRNA binding proteins, it binds directly to 16S rRNA central domain where it helps coordinate assembly of the platform of the 30S subunit. The chain is Small ribosomal subunit protein uS8 from Ruegeria pomeroyi (strain ATCC 700808 / DSM 15171 / DSS-3) (Silicibacter pomeroyi).